Here is a 344-residue protein sequence, read N- to C-terminus: MGTRQTKGSLAERASPGAAPGPRRERPDFWASLLLRAGDKAGRAGAGMPPYHRRVGMVQELLRMVRQGRREEAGTLLQHLRQDLGMESTSLDDVLYRYASFRNLVDPITHDLIISLARYIHCPKPEGDALGAMEKLCRQLTYHLSPHSQWRRHRGLVKRKPQACLKAVLAGSPPDNTVDLSGIPLTSRDLERVTSYLQRCGEQVDSVELGFTGLTDDMVLQLLPALSTLPRLTTLALNGNRLTRAVLRDLTDILKDPSKFPNVTWIDLGNNVDIFSLPQPFLLSLRKRSPKQGHLPTILELGEGPGSGEEVREGTVGQEDPGGGPVAPAEDHHEGKETVAAAQT.

Residues 1–25 form a disordered region; it reads MGTRQTKGSLAERASPGAAPGPRRE. A compositionally biased stretch (low complexity) spans 11-21; it reads AERASPGAAPG. LRR repeat units lie at residues 204–217 and 229–242; these read VDSVELGFTGLTDD and LPRLTTLALNGNRL. Residues 295 to 344 are disordered; sequence LPTILELGEGPGSGEEVREGTVGQEDPGGGPVAPAEDHHEGKETVAAAQT.

It belongs to the LRRC75 family.

The chain is Leucine-rich repeat-containing protein 75A (LRRC75A) from Homo sapiens (Human).